The chain runs to 339 residues: Anthranilate phosphoribosyltransferase (339 aa).

Residues Gly79, 82–83, Ser87, 89–92, 107–115, and Ser119 contribute to the 5-phospho-alpha-D-ribose 1-diphosphate site; these read GD, NIST, and KHGNRSISS. Residue Gly79 participates in anthranilate binding. Ser91 provides a ligand contact to Mg(2+). Asn110 is an anthranilate binding site. Arg165 is an anthranilate binding site. Positions 224 and 225 each coordinate Mg(2+).

This sequence belongs to the anthranilate phosphoribosyltransferase family. As to quaternary structure, homodimer. It depends on Mg(2+) as a cofactor.

The catalysed reaction is N-(5-phospho-beta-D-ribosyl)anthranilate + diphosphate = 5-phospho-alpha-D-ribose 1-diphosphate + anthranilate. It participates in amino-acid biosynthesis; L-tryptophan biosynthesis; L-tryptophan from chorismate: step 2/5. Functionally, catalyzes the transfer of the phosphoribosyl group of 5-phosphorylribose-1-pyrophosphate (PRPP) to anthranilate to yield N-(5'-phosphoribosyl)-anthranilate (PRA). The protein is Anthranilate phosphoribosyltransferase of Listeria monocytogenes serovar 1/2a (strain ATCC BAA-679 / EGD-e).